A 478-amino-acid polypeptide reads, in one-letter code: PRAME family member 11 (478 aa).

The stretch at 99–126 (RWKLQVLDLQDVCENFWMVWSEAMAHGC) is one LRR 1; degenerate repeat. One copy of the LRR 2; degenerate repeat lies at 181–205 (HLCCKKLKILGMPFRNIRSILKMVN). The LRR 3; degenerate repeat unit spans residues 206–232 (LDCIQEVEVNCKWILPILTQFTPYLGH). An LRR 4; degenerate repeat occupies 233 to 268 (LRNLQKLVLSHMDVSRYVSPEQKKEIVTQFTTQFLK). 5 LRR repeats span residues 269 to 294 (LRCLQKLYMNSVSFLEGHLDQLLSCL), 295 to 326 (KTSLKVLTITNCVLLESDLKHLSQCPSISQLK), 327 to 347 (TLDLSGIRLTNYSLVPLQILL), 351 to 378 (AATLEYLDLDDCGIIDSQVNAILPALSR), and 379 to 403 (CFELNTFSFCGNPICMATLENLLSH).

It belongs to the PRAME family.

This is PRAME family member 11 from Homo sapiens (Human).